A 700-amino-acid chain; its full sequence is MDQIDISCIPTTPGVYLYKDPAGKVVYVGKAKHLRRRVASYFRDIQRHTPKTRAMLRSAATVETLSTTTEKEALLLEASLIKKHRPRYNILLRDDKQYVLFQLTRKHHWPRLVLTRKVRKDGSAYFGPFTSGQAARQTWKVIHKVFPLRRCSDKAFRNRVRPCLYHFMNQCPGPCVLDVDRDGYMQMVRKVEMLLAGRSTELIDMLRADMQAASDALEFEEAALLRDQLQAVERTVERQAAVLPGVHDMDAVGLAEAGGGLALSVLFIRRSVLLDKRNFFWSGLTLEEGPEVLLSFLTQYYGPGSFIPPRILVPWDIRTEDREGAELAPAAVCTDAGLLPDTPLLPDCPEAAPLPAAPVFAVSAGDVMPSGHDADPAGTADAPVVRGDSAPEQPLPAAVPPLCAEESASGSALRAVAEMLTELRGGPVRVLPPRNATDNQLVTMATENAREDARAEKRPDVAGVIAAKLGMSAPPVRIEAVDVSHTGGSNTRVGVVVFENGTPARDQYRTYAFADDEAGGDDTGVLALWAVRRVHSGPPWPDLLLVDGGRGQLAAVMTALESAGAGGLFAVASIAKARNEETGRADRRAGNLADRIFLPGRSNPVNFKSGSPELLFLQHVRDTVHDYAIGRHRRARSGAALSGELQRMQGIGPATARLLWEHFSSLQEMVDAGEKGLAALPGIGKAKAAVIHEGLKRLVG.

Residues 11-90 (TTPGVYLYKD…IKKHRPRYNI (80 aa)) form the GIY-YIG domain. One can recognise a UVR domain in the interval 200-235 (TELIDMLRADMQAASDALEFEEAALLRDQLQAVERT).

It belongs to the UvrC family. Interacts with UvrB in an incision complex.

Its subcellular location is the cytoplasm. Functionally, the UvrABC repair system catalyzes the recognition and processing of DNA lesions. UvrC both incises the 5' and 3' sides of the lesion. The N-terminal half is responsible for the 3' incision and the C-terminal half is responsible for the 5' incision. The sequence is that of UvrABC system protein C from Oleidesulfovibrio alaskensis (strain ATCC BAA-1058 / DSM 17464 / G20) (Desulfovibrio alaskensis).